Here is a 441-residue protein sequence, read N- to C-terminus: UDP-N-acetylmuramoylalanine--D-glutamate ligase (441 aa).

129 to 135 (GTNGKST) serves as a coordination point for ATP.

Belongs to the MurCDEF family.

Its subcellular location is the cytoplasm. It carries out the reaction UDP-N-acetyl-alpha-D-muramoyl-L-alanine + D-glutamate + ATP = UDP-N-acetyl-alpha-D-muramoyl-L-alanyl-D-glutamate + ADP + phosphate + H(+). It functions in the pathway cell wall biogenesis; peptidoglycan biosynthesis. Its function is as follows. Cell wall formation. Catalyzes the addition of glutamate to the nucleotide precursor UDP-N-acetylmuramoyl-L-alanine (UMA). This chain is UDP-N-acetylmuramoylalanine--D-glutamate ligase, found in Zymomonas mobilis subsp. mobilis (strain ATCC 31821 / ZM4 / CP4).